We begin with the raw amino-acid sequence, 202 residues long: Imidazoleglycerol-phosphate dehydratase (202 aa).

Belongs to the imidazoleglycerol-phosphate dehydratase family.

The protein localises to the cytoplasm. The enzyme catalyses D-erythro-1-(imidazol-4-yl)glycerol 3-phosphate = 3-(imidazol-4-yl)-2-oxopropyl phosphate + H2O. It participates in amino-acid biosynthesis; L-histidine biosynthesis; L-histidine from 5-phospho-alpha-D-ribose 1-diphosphate: step 6/9. This is Imidazoleglycerol-phosphate dehydratase from Rhizobium meliloti (strain 1021) (Ensifer meliloti).